We begin with the raw amino-acid sequence, 426 residues long: Serine hydroxymethyltransferase (426 aa).

(6S)-5,6,7,8-tetrahydrofolate contacts are provided by residues L118 and 122–124 (GHL). K227 carries the N6-(pyridoxal phosphate)lysine modification. A disordered region spans residues 342-368 (NTIPNDPKPPTQASGIRLGTPAMTTRG).

This sequence belongs to the SHMT family. In terms of assembly, homodimer. The cofactor is pyridoxal 5'-phosphate.

It localises to the cytoplasm. The enzyme catalyses (6R)-5,10-methylene-5,6,7,8-tetrahydrofolate + glycine + H2O = (6S)-5,6,7,8-tetrahydrofolate + L-serine. Its pathway is one-carbon metabolism; tetrahydrofolate interconversion. It functions in the pathway amino-acid biosynthesis; glycine biosynthesis; glycine from L-serine: step 1/1. Functionally, catalyzes the reversible interconversion of serine and glycine with tetrahydrofolate (THF) serving as the one-carbon carrier. This reaction serves as the major source of one-carbon groups required for the biosynthesis of purines, thymidylate, methionine, and other important biomolecules. Also exhibits THF-independent aldolase activity toward beta-hydroxyamino acids, producing glycine and aldehydes, via a retro-aldol mechanism. In Thermomicrobium roseum (strain ATCC 27502 / DSM 5159 / P-2), this protein is Serine hydroxymethyltransferase.